The primary structure comprises 421 residues: Ankyrin repeat and SOCS box protein 6 (421 aa).

ANK repeat units lie at residues 67 to 97, 102 to 131, 136 to 166, 170 to 205, 226 to 255, and 260 to 289; these read EGVSNALLKMAELGLTRAADVLLRHGANLNF, TYYTALHIAVLRNQPDMVELLVHHGADINR, HESSPLDLASEEPERLPCLQRLLDLGADVNA, HGKTALLHALASSDGVQIHNTENIRLLLEGGADVKA, GGDKEEAQMINRFCFQVTRLLLAHGADPSE, and ESLTHICLKSFKLHFPLLRFLLESGAAYNC. In terms of domain architecture, SOCS box spans 360 to 415; the sequence is ALHFSLRQLESYPPPLKHLCRVAIRLYLQPWPVDVKVKALPLPDRLKWYLLSEHSG.

The protein belongs to the ankyrin SOCS box (ASB) family. As to quaternary structure, binds APS. Identified in a complex with ELOB and ELOC. Interacts with CUL5 and RNF7. Interacts with SQSTM1.

The protein resides in the cytoplasm. Its pathway is protein modification; protein ubiquitination. Probable substrate-recognition component of a SCF-like ECS (Elongin-Cullin-SOCS-box protein) E3 ubiquitin-protein ligase complex which mediates the ubiquitination and subsequent proteasomal degradation of target proteins. May play a role in the regulation of cell proliferation and autophagy by promoting the ubiquitination and degradation of SQSTM1. This Pongo abelii (Sumatran orangutan) protein is Ankyrin repeat and SOCS box protein 6 (ASB6).